Reading from the N-terminus, the 695-residue chain is Polyribonucleotide nucleotidyltransferase (695 aa).

Positions 486 and 492 each coordinate Mg(2+). The KH domain maps to 553 to 612 (PRIETMQINTSKIATVIGPGGKQIRQIIERSGAQVDINDDGVINIAASTQESINKAKELI). The S1 motif domain occupies 622–690 (GKVYNGRVTS…EKGQLKLSHK (69 aa)).

Belongs to the polyribonucleotide nucleotidyltransferase family. Requires Mg(2+) as cofactor.

The protein resides in the cytoplasm. The enzyme catalyses RNA(n+1) + phosphate = RNA(n) + a ribonucleoside 5'-diphosphate. Its function is as follows. Involved in mRNA degradation. Catalyzes the phosphorolysis of single-stranded polyribonucleotides processively in the 3'- to 5'-direction. The protein is Polyribonucleotide nucleotidyltransferase of Chlamydia trachomatis serovar D (strain ATCC VR-885 / DSM 19411 / UW-3/Cx).